A 613-amino-acid polypeptide reads, in one-letter code: Dihydroxy-acid dehydratase (613 aa).

Residue aspartate 81 participates in Mg(2+) binding. Residue cysteine 122 coordinates [2Fe-2S] cluster. Residues aspartate 123 and lysine 124 each coordinate Mg(2+). The residue at position 124 (lysine 124) is an N6-carboxylysine. [2Fe-2S] cluster is bound at residue cysteine 195. Glutamate 491 is a Mg(2+) binding site. Serine 517 serves as the catalytic Proton acceptor.

Belongs to the IlvD/Edd family. Homodimer. It depends on [2Fe-2S] cluster as a cofactor. Mg(2+) is required as a cofactor.

The enzyme catalyses (2R)-2,3-dihydroxy-3-methylbutanoate = 3-methyl-2-oxobutanoate + H2O. The catalysed reaction is (2R,3R)-2,3-dihydroxy-3-methylpentanoate = (S)-3-methyl-2-oxopentanoate + H2O. It participates in amino-acid biosynthesis; L-isoleucine biosynthesis; L-isoleucine from 2-oxobutanoate: step 3/4. It functions in the pathway amino-acid biosynthesis; L-valine biosynthesis; L-valine from pyruvate: step 3/4. Functions in the biosynthesis of branched-chain amino acids. Catalyzes the dehydration of (2R,3R)-2,3-dihydroxy-3-methylpentanoate (2,3-dihydroxy-3-methylvalerate) into 2-oxo-3-methylpentanoate (2-oxo-3-methylvalerate) and of (2R)-2,3-dihydroxy-3-methylbutanoate (2,3-dihydroxyisovalerate) into 2-oxo-3-methylbutanoate (2-oxoisovalerate), the penultimate precursor to L-isoleucine and L-valine, respectively. This chain is Dihydroxy-acid dehydratase, found in Aeromonas hydrophila subsp. hydrophila (strain ATCC 7966 / DSM 30187 / BCRC 13018 / CCUG 14551 / JCM 1027 / KCTC 2358 / NCIMB 9240 / NCTC 8049).